Here is a 114-residue protein sequence, read N- to C-terminus: Large ribosomal subunit protein uL22 (114 aa).

It belongs to the universal ribosomal protein uL22 family. As to quaternary structure, part of the 50S ribosomal subunit.

This protein binds specifically to 23S rRNA; its binding is stimulated by other ribosomal proteins, e.g. L4, L17, and L20. It is important during the early stages of 50S assembly. It makes multiple contacts with different domains of the 23S rRNA in the assembled 50S subunit and ribosome. Functionally, the globular domain of the protein is located near the polypeptide exit tunnel on the outside of the subunit, while an extended beta-hairpin is found that lines the wall of the exit tunnel in the center of the 70S ribosome. The protein is Large ribosomal subunit protein uL22 of Streptococcus pyogenes serotype M6 (strain ATCC BAA-946 / MGAS10394).